Reading from the N-terminus, the 280-residue chain is Polyamine aminopropyltransferase 1 (280 aa).

In terms of domain architecture, PABS spans 3 to 237; the sequence is DIVFIERDPY…YWWTFSIASK (235 aa). Residue Gln-33 coordinates S-methyl-5'-thioadenosine. His-64 and Asp-88 together coordinate spermidine. S-methyl-5'-thioadenosine contacts are provided by residues Asp-108 and 139-140; that span reads DG. Catalysis depends on Asp-157, which acts as the Proton acceptor. Position 157 to 160 (157 to 160) interacts with spermidine; it reads DSTD.

It belongs to the spermidine/spermine synthase family. In terms of assembly, homodimer or homotetramer.

It is found in the cytoplasm. It carries out the reaction S-adenosyl 3-(methylsulfanyl)propylamine + putrescine = S-methyl-5'-thioadenosine + spermidine + H(+). Its pathway is amine and polyamine biosynthesis; spermidine biosynthesis; spermidine from putrescine: step 1/1. In terms of biological role, catalyzes the irreversible transfer of a propylamine group from the amino donor S-adenosylmethioninamine (decarboxy-AdoMet) to putrescine (1,4-diaminobutane) to yield spermidine. This Aquifex aeolicus (strain VF5) protein is Polyamine aminopropyltransferase 1.